Here is a 210-residue protein sequence, read N- to C-terminus: Orotate phosphoribosyltransferase (210 aa).

5-phospho-alpha-D-ribose 1-diphosphate is bound by residues R94, K98, H100, and 120 to 128 (EDLISTGGS). S124 is a binding site for orotate.

The protein belongs to the purine/pyrimidine phosphoribosyltransferase family. PyrE subfamily. In terms of assembly, homodimer. It depends on Mg(2+) as a cofactor.

It carries out the reaction orotidine 5'-phosphate + diphosphate = orotate + 5-phospho-alpha-D-ribose 1-diphosphate. The protein operates within pyrimidine metabolism; UMP biosynthesis via de novo pathway; UMP from orotate: step 1/2. Catalyzes the transfer of a ribosyl phosphate group from 5-phosphoribose 1-diphosphate to orotate, leading to the formation of orotidine monophosphate (OMP). The protein is Orotate phosphoribosyltransferase of Bacillus cereus (strain B4264).